Consider the following 335-residue polypeptide: L-lactate dehydrogenase B chain (335 aa).

Residues 29–57 (GQVGMACAISILEKGLCDELALVDVVEDK) and R99 contribute to the NAD(+) site. The substrate site is built by R106, N138, and R169. N138 is an NAD(+) binding site. H193 functions as the Proton acceptor in the catalytic mechanism. Substrate is bound at residue T248.

This sequence belongs to the LDH/MDH superfamily. LDH family. In terms of assembly, homotetramer.

It localises to the cytoplasm. The catalysed reaction is (S)-lactate + NAD(+) = pyruvate + NADH + H(+). Its pathway is fermentation; pyruvate fermentation to lactate; (S)-lactate from pyruvate: step 1/1. Functionally, interconverts simultaneously and stereospecifically pyruvate and lactate with concomitant interconversion of NADH and NAD(+). This is L-lactate dehydrogenase B chain (LDHB) from Sceloporus undulatus (Eastern fence lizard).